The chain runs to 367 residues: Leucine dehydrogenase (367 aa).

Lysine 80 is an active-site residue. Residue 180-186 coordinates NAD(+); that stretch reads GVGNVAY.

This sequence belongs to the Glu/Leu/Phe/Val dehydrogenases family. As to quaternary structure, homohexamer.

The enzyme catalyses L-leucine + NAD(+) + H2O = 4-methyl-2-oxopentanoate + NH4(+) + NADH + H(+). The protein operates within amino-acid degradation; L-leucine degradation; 4-methyl-2-oxopentanoate from L-leucine (dehydrogenase route): step 1/1. Its function is as follows. Catalyzes the reversible deamination of L-leucine to 4-methyl-2-oxopentanoate. The chain is Leucine dehydrogenase (ldh) from Geobacillus stearothermophilus (Bacillus stearothermophilus).